A 394-amino-acid polypeptide reads, in one-letter code: RILP-like protein 1 (394 aa).

The 88-residue stretch at 2 to 89 (EGISALEKNV…RLERMDRIEK (88 aa)) folds into the RH1 domain. Residues 68–312 (EMEELRLELD…KVFMLQEELA (245 aa)) adopt a coiled-coil conformation. The RH2 domain occupies 282 to 347 (RPRFTLQELR…IPQESGIKRL (66 aa)). Positions 318-337 (EADEEHKLPQSSPVIDSKAP) are disordered.

It belongs to the RILPL family.

It is found in the cytoplasm. It localises to the cytosol. Its subcellular location is the cytoskeleton. The protein resides in the microtubule organizing center. The protein localises to the centrosome. It is found in the cell projection. It localises to the cilium. Functionally, plays a role in the regulation of cell shape and polarity. Plays a role in cellular protein transport, including protein transport away from primary cilia. Neuroprotective protein. The sequence is that of RILP-like protein 1 (rilpl1) from Xenopus tropicalis (Western clawed frog).